The chain runs to 351 residues: Lipoyl synthase, mitochondrial (351 aa).

7 residues coordinate [4Fe-4S] cluster: C84, C89, C95, C115, C119, C122, and S330. Positions 100–319 constitute a Radical SAM core domain; it reads DKSKATATIM…QKRAMDMGFL (220 aa).

Belongs to the radical SAM superfamily. Lipoyl synthase family. It depends on [4Fe-4S] cluster as a cofactor.

The protein resides in the mitochondrion. It catalyses the reaction [[Fe-S] cluster scaffold protein carrying a second [4Fe-4S](2+) cluster] + N(6)-octanoyl-L-lysyl-[protein] + 2 oxidized [2Fe-2S]-[ferredoxin] + 2 S-adenosyl-L-methionine + 4 H(+) = [[Fe-S] cluster scaffold protein] + N(6)-[(R)-dihydrolipoyl]-L-lysyl-[protein] + 4 Fe(3+) + 2 hydrogen sulfide + 2 5'-deoxyadenosine + 2 L-methionine + 2 reduced [2Fe-2S]-[ferredoxin]. Its pathway is protein modification; protein lipoylation via endogenous pathway; protein N(6)-(lipoyl)lysine from octanoyl-[acyl-carrier-protein]: step 2/2. Catalyzes the radical-mediated insertion of two sulfur atoms into the C-6 and C-8 positions of the octanoyl moiety bound to the lipoyl domains of lipoate-dependent enzymes, thereby converting the octanoylated domains into lipoylated derivatives. In Yarrowia lipolytica (strain CLIB 122 / E 150) (Yeast), this protein is Lipoyl synthase, mitochondrial.